The following is a 100-amino-acid chain: Apolipoprotein C-II (100 aa).

The first 22 residues, 1–22 (MGSRFLLALFLVLLVLGCEVQA), serve as a signal peptide directing secretion. The lipid binding stretch occupies residues 66–74 (SVDEKLRDM). The segment at 78-100 (SSAAMTTYASIFTDQIFTLLKGE) is lipoprotein lipase cofactor.

Belongs to the apolipoprotein C2 family. Proapolipoprotein C-II is synthesized as a sialic acid containing glycoprotein which is subsequently desialylated prior to its proteolytic processing. In terms of processing, proapolipoprotein C-II, the major form found in plasma undergoes proteolytic cleavage of its N-terminal hexapeptide to generate the mature form apolipoprotein C-II, which occurs as the minor form in plasma.

The protein resides in the secreted. Component of chylomicrons, very low-density lipoproteins (VLDL), low-density lipoproteins (LDL), and high-density lipoproteins (HDL) in plasma. Plays an important role in lipoprotein metabolism as an activator of lipoprotein lipase. This Bramus lutescens (Transcaucasian mole vole) protein is Apolipoprotein C-II (APOC2).